A 473-amino-acid chain; its full sequence is Iron transporter SMF3 (473 aa).

2 helical membrane passes run 14–34 (FIGPGILVSVAYMDPGNYATS) and 44–64 (TLLFSIFISNIFAVLLQCLCV). Residue N87 is glycosylated (N-linked (GlcNAc...) asparagine). The next 9 membrane-spanning stretches (helical) occupy residues 97-117 (AIIATDLAEVVGTAIALQILF), 119-139 (IPLTWGVLLTVLDVLVILMFY), 152-172 (FEFGVGILVIGTCICFVLELF), 198-218 (ALYISLGILGATVMPHSLYLG), 257-277 (LIISLFLIATFVNSAILIVAG), 297-317 (LLVHYISPAAGLIFALAMLCS), 352-372 (LIAIVPCLFVTLTMGEKGISD), 373-393 (ILNFSQVVLSLILPIVSAPLI), and 448-468 (VFVWALIGSLNCYLVISYLLG).

Belongs to the NRAMP family.

Its subcellular location is the vacuole membrane. The protein resides in the endoplasmic reticulum membrane. In terms of biological role, has a role in controlling the cellular iron ion levels. Mobilizes vacuolar stores of iron in conditions of low iron levels. This Saccharomyces cerevisiae (strain ATCC 204508 / S288c) (Baker's yeast) protein is Iron transporter SMF3 (SMF3).